A 101-amino-acid polypeptide reads, in one-letter code: Ferredoxin Fdx2 (101 aa).

2 4Fe-4S ferredoxin-type domains span residues 1–29 (MATY…EGDE) and 31–64 (YVID…PNPQ). Residues cysteine 9, cysteine 12, cysteine 15, cysteine 19, cysteine 38, cysteine 41, cysteine 50, and cysteine 54 each coordinate [4Fe-4S] cluster.

[4Fe-4S] cluster is required as a cofactor.

In terms of biological role, ferredoxins are iron-sulfur proteins that transfer electrons in a wide variety of metabolic reactions. Fdx2 can receive electrons from both FdR_A and FdR_B ferredoxin reductases, with a preference for FdR_B compared with FdR_A, and transfer the electrons to the cytochrome P450 CYP260A1. The protein is Ferredoxin Fdx2 of Sorangium cellulosum (strain So ce56) (Polyangium cellulosum (strain So ce56)).